Here is a 406-residue protein sequence, read N- to C-terminus: GTPase Obg (406 aa).

In terms of domain architecture, Obg spans 1 to 159; it reads MKFVDEVSIH…RDLKLELKVL (159 aa). Residues 127 to 148 form a disordered region; sequence NTRFKSSTNRAPRQTTPGKPGE. Residues 129–143 are compositionally biased toward polar residues; it reads RFKSSTNRAPRQTTP. The region spanning 160–334 is the OBG-type G domain; it reads ADVGLLGLPN…LSQDIMRYLD (175 aa). Residues 166–173, 191–195, 213–216, 283–286, and 315–317 contribute to the GTP site; these read GLPNAGKS, FTTLV, DIPG, NKMD, and SAL. Ser173 and Thr193 together coordinate Mg(2+). A disordered region spans residues 382-406; that stretch reads AGAVDDDDFDDEEDDGDGPEIFYVP. Residues 385-399 are compositionally biased toward acidic residues; the sequence is VDDDDFDDEEDDGDG.

Belongs to the TRAFAC class OBG-HflX-like GTPase superfamily. OBG GTPase family. Monomer. Mg(2+) is required as a cofactor.

The protein resides in the cytoplasm. In terms of biological role, an essential GTPase which binds GTP, GDP and possibly (p)ppGpp with moderate affinity, with high nucleotide exchange rates and a fairly low GTP hydrolysis rate. Plays a role in control of the cell cycle, stress response, ribosome biogenesis and in those bacteria that undergo differentiation, in morphogenesis control. The sequence is that of GTPase Obg from Pseudomonas aeruginosa (strain LESB58).